A 343-amino-acid polypeptide reads, in one-letter code: Anthranilate phosphoribosyltransferase (343 aa).

5-phospho-alpha-D-ribose 1-diphosphate contacts are provided by residues G84, 87–88 (GD), T92, 94–97 (NIST), 112–120 (KHGNRGVSS), and S124. G84 is a binding site for anthranilate. S96 is a Mg(2+) binding site. Residue N115 participates in anthranilate binding. An anthranilate-binding site is contributed by R170. Residues D229 and E230 each contribute to the Mg(2+) site.

The protein belongs to the anthranilate phosphoribosyltransferase family. As to quaternary structure, homodimer. It depends on Mg(2+) as a cofactor.

The enzyme catalyses N-(5-phospho-beta-D-ribosyl)anthranilate + diphosphate = 5-phospho-alpha-D-ribose 1-diphosphate + anthranilate. The protein operates within amino-acid biosynthesis; L-tryptophan biosynthesis; L-tryptophan from chorismate: step 2/5. Its function is as follows. Catalyzes the transfer of the phosphoribosyl group of 5-phosphorylribose-1-pyrophosphate (PRPP) to anthranilate to yield N-(5'-phosphoribosyl)-anthranilate (PRA). The polypeptide is Anthranilate phosphoribosyltransferase (Burkholderia thailandensis (strain ATCC 700388 / DSM 13276 / CCUG 48851 / CIP 106301 / E264)).